We begin with the raw amino-acid sequence, 98 residues long: Large ribosomal subunit protein bL27 (98 aa).

Residues 1 to 22 form a disordered region; the sequence is MAHKKGTGSTRNGRDSNAQRLG. Over residues 7–19 the composition is skewed to polar residues; it reads TGSTRNGRDSNAQ.

It belongs to the bacterial ribosomal protein bL27 family.

The polypeptide is Large ribosomal subunit protein bL27 (Nostoc punctiforme (strain ATCC 29133 / PCC 73102)).